The following is a 336-amino-acid chain: Small ribosomal subunit protein RACK1y (336 aa).

WD repeat units lie at residues 15–55 (GHND…TAVA), 74–113 (GHSH…TTRR), 116–155 (GHTK…KYTI), 164–205 (GHTG…LRTK), 208–247 (GHNG…MLYK), 249–287 (DAGA…VMQD), and 297–336 (SQML…GYAI).

Belongs to the WD repeat G protein beta family. Ribosomal protein RACK1 subfamily. In terms of assembly, homodimer and heterodimer with RACK1A.

Functionally, component of the RACK1 regulatory proteins that play a role in multiple signal transduction pathways. The chain is Small ribosomal subunit protein RACK1y (RACK1B) from Oryza sativa subsp. japonica (Rice).